Consider the following 304-residue polypeptide: ULP1-interacting protein 4 (304 aa).

Positions 72 to 269 (DEYPKEVDEH…SIVKEGDANT (198 aa)) are disordered. Positions 73-83 (EYPKEVDEHSN) are enriched in basic and acidic residues. Positions 129-149 (TPSLKGNVTFPSPKTAISQDG) are enriched in polar residues. Residue serine 140 is modified to Phosphoserine. Over residues 155-183 (ETTRKERKYEHAPLNEVPVERDPKEENKE) the composition is skewed to basic and acidic residues. Phosphoserine occurs at positions 185 and 205.

As to quaternary structure, interacts with ULP1.

It is found in the endoplasmic reticulum membrane. The protein localises to the mitochondrion outer membrane. It localises to the nucleus envelope. The polypeptide is ULP1-interacting protein 4 (UIP4) (Saccharomyces cerevisiae (strain ATCC 204508 / S288c) (Baker's yeast)).